Here is a 311-residue protein sequence, read N- to C-terminus: Probable manganese-dependent inorganic pyrophosphatase (311 aa).

Mn(2+)-binding residues include H9, D13, D15, D77, H99, and D151.

This sequence belongs to the PPase class C family. It depends on Mn(2+) as a cofactor.

It is found in the cytoplasm. It carries out the reaction diphosphate + H2O = 2 phosphate + H(+). In Streptococcus pneumoniae (strain JJA), this protein is Probable manganese-dependent inorganic pyrophosphatase.